The following is a 593-amino-acid chain: Bifunctional lycopene cyclase/phytoene synthase (593 aa).

The lycopene beta-cyclase stretch occupies residues 1 to 242 (MAYDYALVHL…IVFGMAVFDQ (242 aa)). Transmembrane regions (helical) follow at residues 8 to 28 (VHLK…YPIF), 31 to 51 (IHFL…LPWD), 77 to 97 (IEEL…YILL), 117 to 136 (IARG…LYGV), 147 to 167 (YLGL…TVAG), 169 to 189 (FILT…TVYL), and 231 to 251 (ILIV…FAFP). The segment at 249–593 (AFPHLFPKVP…KTVLKALFSA (345 aa)) is phytoene synthase.

It in the N-terminal section; belongs to the lycopene beta-cyclase family. The protein in the C-terminal section; belongs to the phytoene/squalene synthase family.

Its subcellular location is the membrane. The catalysed reaction is all-trans-lycopene = gamma-carotene. It carries out the reaction gamma-carotene = all-trans-beta-carotene. The enzyme catalyses 2 (2E,6E,10E)-geranylgeranyl diphosphate = 15-cis-phytoene + 2 diphosphate. The protein operates within carotenoid biosynthesis; beta-carotene biosynthesis. Its pathway is carotenoid biosynthesis; phytoene biosynthesis; all-trans-phytoene from geranylgeranyl diphosphate: step 1/1. Its function is as follows. Bifunctional enzyme that catalyzes the reactions from geranylgeranyl diphosphate to phytoene (phytoene synthase) and lycopene to beta-carotene via the intermediate gamma-carotene (lycopene cyclase). In Podospora anserina (strain S / ATCC MYA-4624 / DSM 980 / FGSC 10383) (Pleurage anserina), this protein is Bifunctional lycopene cyclase/phytoene synthase.